We begin with the raw amino-acid sequence, 205 residues long: N-(5'-phosphoribosyl)anthranilate isomerase (205 aa).

The protein belongs to the TrpF family.

The enzyme catalyses N-(5-phospho-beta-D-ribosyl)anthranilate = 1-(2-carboxyphenylamino)-1-deoxy-D-ribulose 5-phosphate. It participates in amino-acid biosynthesis; L-tryptophan biosynthesis; L-tryptophan from chorismate: step 3/5. This Zygosaccharomyces bailii protein is N-(5'-phosphoribosyl)anthranilate isomerase (TRP1).